Consider the following 262-residue polypeptide: MTRIHPTAIVEPGAQIDESVEIGPYAIVGPHVTIGARTTIGSHSVIEGHTTLGEDNRIGHYASVGGRPQDMKYKNEPTRLVIGNRNTIREFTTIHTGTVQDAGVTTLGDDNWIMAYVHIGHDCRVGNNVILSSNAQMAGHVEIGDFAIIGGMSGVHQFVRIGAHSMLGGASALVQDVPPFVIAAGNKAEPHGINVEGLRRRGFSPDAISALRSAYRLLYKNGLSLDEAKVQLRELASAGGDGDAPVAALVAFVDASQRGIIR.

It belongs to the transferase hexapeptide repeat family. LpxA subfamily. In terms of assembly, homotrimer.

It is found in the cytoplasm. The enzyme catalyses a (3R)-hydroxyacyl-[ACP] + UDP-N-acetyl-alpha-D-glucosamine = a UDP-3-O-[(3R)-3-hydroxyacyl]-N-acetyl-alpha-D-glucosamine + holo-[ACP]. Its pathway is glycolipid biosynthesis; lipid IV(A) biosynthesis; lipid IV(A) from (3R)-3-hydroxytetradecanoyl-[acyl-carrier-protein] and UDP-N-acetyl-alpha-D-glucosamine: step 1/6. Its function is as follows. Involved in the biosynthesis of lipid A, a phosphorylated glycolipid that anchors the lipopolysaccharide to the outer membrane of the cell. This is Acyl-[acyl-carrier-protein]--UDP-N-acetylglucosamine O-acyltransferase from Burkholderia vietnamiensis (strain G4 / LMG 22486) (Burkholderia cepacia (strain R1808)).